The following is a 786-amino-acid chain: Receptor-like protein 30 (786 aa).

The signal sequence occupies residues 1–30 (MIPSQSNSFSGSVITLYFFLLGSLVLRTLA). The Extracellular portion of the chain corresponds to 31 to 739 (SSRLHYCRHD…SEPEEQVINW (709 aa)). Residues asparagine 67, asparagine 98, asparagine 115, and asparagine 133 are each glycosylated (N-linked (GlcNAc...) asparagine). LRR repeat units follow at residues 110–133 (LQQL…SLGN), 134–158 (LSRL…VSKL), 159–181 (NQLR…SFTN), and 183–204 (TKLS…SFIL). Residues asparagine 181, asparagine 199, and asparagine 206 are each glycosylated (N-linked (GlcNAc...) asparagine). LRR repeat units lie at residues 207–231 (LTSL…MSGL), 233–255 (NLKY…LFTI), 257–279 (SLQI…NISS), 280–304 (SSRL…ISEI), 305–328 (HSLI…ISKL), 329–352 (VNLQ…LWGL), 354–375 (TVTL…ALDG), 376–399 (ESMQ…ICKQ), 400–423 (RFLK…LKNS), 425–447 (YWLK…VFVN), 448–472 (ASML…LINC), 474–496 (GMEL…LVSL), 497–524 (PSLR…GFQH), and 526–546 (RLID…YFSN). An N-linked (GlcNAc...) asparagine glycan is attached at asparagine 276. N-linked (GlcNAc...) asparagine glycosylation is present at asparagine 338. N-linked (GlcNAc...) asparagine glycosylation is found at asparagine 413, asparagine 422, asparagine 434, asparagine 447, and asparagine 471. Asparagine 558 is a glycosylation site (N-linked (GlcNAc...) asparagine). LRR repeat units follow at residues 596–621 (IPYF…VGLL), 622–645 (KELR…LANL), 646–669 (TNLE…LGSL), and 671–694 (FLST…QFQS). Residues asparagine 628 and asparagine 644 are each glycosylated (N-linked (GlcNAc...) asparagine). Asparagine 676 carries N-linked (GlcNAc...) asparagine glycosylation. A helical transmembrane segment spans residues 740-760 (IAAAIAYGPGVFCGLVIGHIF). The Cytoplasmic segment spans residues 761–786 (FTAHKHEWFMEKFHRNKRRVVTTSAR).

This sequence belongs to the RLP family.

Its subcellular location is the cell membrane. Its function is as follows. Receptor for microbe-associated molecular patterns (MAMPs) that induces a BAK1-dependent basal immune response to necrotrophic fungi (e.g. S.sclerotiorum) in the presence of MAMPs (e.g. flg22 and SCLEROTINIA CULTURE FILTRATE ELICITOR1 (SCFE1) from the necrotrophic fungal pathogen S.sclerotiorum). Functionality seems to depend on the presence of the receptor kinase SOBIR1 as an adapter protein. Required for full non-host resistance to bacterial pathogens (e.g. P.syringae pv phaseolicola). The protein is Receptor-like protein 30 of Arabidopsis thaliana (Mouse-ear cress).